The following is a 413-amino-acid chain: Aspartate aminotransferase, cytoplasmic (413 aa).

Gly39 and Trp141 together coordinate L-aspartate. At Ser149 the chain carries Phosphoserine. Residue Asn195 coordinates L-aspartate. Lys259 is subject to N6-(pyridoxal phosphate)lysine. Arg387 contributes to the L-aspartate binding site.

The protein belongs to the class-I pyridoxal-phosphate-dependent aminotransferase family. In terms of assembly, homodimer. It depends on pyridoxal 5'-phosphate as a cofactor.

Its subcellular location is the cytoplasm. The catalysed reaction is L-aspartate + 2-oxoglutarate = oxaloacetate + L-glutamate. It catalyses the reaction L-cysteine + 2-oxoglutarate = 2-oxo-3-sulfanylpropanoate + L-glutamate. It carries out the reaction (2S)-2-aminobutanoate + 2-oxoglutarate = 2-oxobutanoate + L-glutamate. The enzyme catalyses 3-sulfino-L-alanine + 2-oxoglutarate = 3-sulfinopyruvate + L-glutamate. In terms of biological role, biosynthesis of L-glutamate from L-aspartate or L-cysteine. Important regulator of levels of glutamate, the major excitatory neurotransmitter of the vertebrate central nervous system. Acts as a scavenger of glutamate in brain neuroprotection. The aspartate aminotransferase activity is involved in hepatic glucose synthesis during development and in adipocyte glyceroneogenesis. Using L-cysteine as substrate, regulates levels of mercaptopyruvate, an important source of hydrogen sulfide. Mercaptopyruvate is converted into H(2)S via the action of 3-mercaptopyruvate sulfurtransferase (3MST). Hydrogen sulfide is an important synaptic modulator and neuroprotectant in the brain. The chain is Aspartate aminotransferase, cytoplasmic from Pan troglodytes (Chimpanzee).